Consider the following 161-residue polypeptide: Phosphohistidine phosphatase SixA (161 aa).

This sequence belongs to the SixA phosphatase family.

Functionally, exhibits phosphohistidine phosphatase activity towards the HPt domain of the ArcB sensor involved in the multistep His-Asp phosphorelay. This Escherichia coli (strain K12) protein is Phosphohistidine phosphatase SixA (sixA).